Reading from the N-terminus, the 116-residue chain is Endoribonuclease toxin ChpB (116 aa).

It belongs to the PemK/MazF family. Homodimer, interacts with ChpS, which inhibits the endoribonuclease activity.

Stimulated in vitro in a concentration-dependent fashion by extracellular death factor (EDF, a quorum sensing pentapeptide sequence NNWNN, probably produced from the zwf gene product glucose-6-phosphate 1-dehydrogenase), which is able to overcome inhibition by cognate antitoxin ChpS. In terms of biological role, toxic component of a type II toxin-antitoxin (TA) system. ChpB is a sequence-specific mRNA and (weak) tmRNA endoribonuclease that inhibits protein synthesis and induces bacterial stasis. Cleavage is independent of the ribosome. Cleavage occurs at ACY sequences where Y is not C. The endoribonuclease activity is not as strong as that of MazF. The endoribonuclease activity (a toxin) is inhibited by its labile cognate antitoxin ChpS. Toxicity results when the levels of ChpS decrease in the cell, leading to mRNA degradation. Both ChpS and ChpB probably bind to the promoter region of the chpS-chpB operon to autoregulate their synthesis. The sequence is that of Endoribonuclease toxin ChpB (chpB) from Escherichia coli (strain K12).